Reading from the N-terminus, the 156-residue chain is ATP synthase subunit b (156 aa).

Residues 11–31 (AIAFVLFVLFCMKYVWPPIMA) form a helical membrane-spanning segment.

Belongs to the ATPase B chain family. As to quaternary structure, F-type ATPases have 2 components, F(1) - the catalytic core - and F(0) - the membrane proton channel. F(1) has five subunits: alpha(3), beta(3), gamma(1), delta(1), epsilon(1). F(0) has three main subunits: a(1), b(2) and c(10-14). The alpha and beta chains form an alternating ring which encloses part of the gamma chain. F(1) is attached to F(0) by a central stalk formed by the gamma and epsilon chains, while a peripheral stalk is formed by the delta and b chains.

The protein localises to the cell inner membrane. In terms of biological role, f(1)F(0) ATP synthase produces ATP from ADP in the presence of a proton or sodium gradient. F-type ATPases consist of two structural domains, F(1) containing the extramembraneous catalytic core and F(0) containing the membrane proton channel, linked together by a central stalk and a peripheral stalk. During catalysis, ATP synthesis in the catalytic domain of F(1) is coupled via a rotary mechanism of the central stalk subunits to proton translocation. Component of the F(0) channel, it forms part of the peripheral stalk, linking F(1) to F(0). The chain is ATP synthase subunit b from Proteus mirabilis (strain HI4320).